The chain runs to 540 residues: Phosphoenolpyruvate carboxykinase (ATP) (540 aa).

Arg65 contributes to the substrate binding site. N6-acetyllysine is present on Lys87. Positions 207 and 213 each coordinate substrate. Residues Lys213, His232, and 248-256 (GLSGTGKTT) contribute to the ATP site. The Mn(2+) site is built by Lys213 and His232. Residue Asp269 coordinates Mn(2+). Residues Glu297, Arg333, 449-450 (RI), and Thr455 each bind ATP. Arg333 lines the substrate pocket. Lys523 carries the N6-acetyllysine modification.

This sequence belongs to the phosphoenolpyruvate carboxykinase (ATP) family. As to quaternary structure, monomer. Requires Mn(2+) as cofactor.

It is found in the cytoplasm. The catalysed reaction is oxaloacetate + ATP = phosphoenolpyruvate + ADP + CO2. It participates in carbohydrate biosynthesis; gluconeogenesis. Functionally, involved in the gluconeogenesis. Catalyzes the conversion of oxaloacetate (OAA) to phosphoenolpyruvate (PEP) through direct phosphoryl transfer between the nucleoside triphosphate and OAA. The sequence is that of Phosphoenolpyruvate carboxykinase (ATP) from Shigella flexneri.